The primary structure comprises 825 residues: Heterogeneous nuclear ribonucleoprotein U (825 aa).

Ser-2 bears the N-acetylserine; partial mark. A Phosphoserine modification is found at Ser-4. An SAP domain is found at Val-8–Leu-42. N6-acetyllysine occurs at positions 17 and 21. Residues Ala-41–Glu-281 form a disordered region. The residue at position 59 (Ser-59) is a Phosphoserine; by PLK1. The residue at position 66 (Ser-66) is a Phosphoserine. Over residues Ala-72–Gly-81 the composition is skewed to low complexity. Composition is skewed to acidic residues over residues Gly-82–Gly-95, Pro-120–Asp-134, and Glu-140–Gly-153. Residues Gly-159–Gly-178 show a composition bias toward low complexity. Position 186 is an N6-acetyllysine (Lys-186). Residue Ser-187 is modified to ADP-ribosylserine. The segment covering Ala-199–Gly-211 has biased composition (low complexity). At Lys-215 the chain carries N6-acetyllysine. Residues Gly-233–Tyr-266 show a composition bias toward basic and acidic residues. Arg-255 carries the citrulline modification. The residue at position 265 (Lys-265) is an N6-acetyllysine; alternate. Lys-265 is covalently cross-linked (Glycyl lysine isopeptide (Lys-Gly) (interchain with G-Cter in SUMO1); alternate). Lys-265 is covalently cross-linked (Glycyl lysine isopeptide (Lys-Gly) (interchain with G-Cter in SUMO2); alternate). Tyr-266 carries the phosphotyrosine modification. 2 positions are modified to phosphoserine: Ser-267 and Ser-271. Residues Ser-267 to Lys-464 form the B30.2/SPRY domain. Residue Thr-286 is modified to Phosphothreonine. N6-acetyllysine is present on Lys-352. Residues Pro-488–Glu-672 form an ATPase domain region. Lys-495 participates in a covalent cross-link: Glycyl lysine isopeptide (Lys-Gly) (interchain with G-Cter in SUMO2). Residue Gly-504 to Thr-511 participates in ATP binding. An N6-acetyllysine; alternate mark is found at Lys-516 and Lys-524. Residues Lys-516 and Lys-524 each participate in a glycyl lysine isopeptide (Lys-Gly) (interchain with G-Cter in SUMO2); alternate cross-link. Residue Thr-532 is modified to Phosphothreonine. Lys-536 is covalently cross-linked (Glycyl lysine isopeptide (Lys-Gly) (interchain with G-Cter in SUMO2)). Lys-551 carries the N6-acetyllysine modification. The residue at position 565 (Lys-565) is an N6-acetyllysine; alternate. Residue Lys-565 forms a Glycyl lysine isopeptide (Lys-Gly) (interchain with G-Cter in SUMO2); alternate linkage. Lys-574 is covalently cross-linked (Glycyl lysine isopeptide (Lys-Gly) (interchain with G-Cter in SUMO2)). A Phosphothreonine modification is found at Thr-582. Glycyl lysine isopeptide (Lys-Gly) (interchain with G-Cter in SUMO2) cross-links involve residues Lys-609 and Lys-626. The tract at residues Glu-611–Lys-626 is actin-binding. Lys-635 bears the N6-acetyllysine; alternate mark. Lys-635 is covalently cross-linked (Glycyl lysine isopeptide (Lys-Gly) (interchain with G-Cter in SUMO2); alternate). Glycyl lysine isopeptide (Lys-Gly) (interchain with G-Cter in SUMO2) cross-links involve residues Lys-664 and Lys-670. Positions Glu-671–Gln-683 are enriched in basic and acidic residues. Residues Glu-671–Ile-749 form a disordered region. Position 702 is an omega-N-methylarginine (Arg-702). The span at Gly-710–Gly-728 shows a compositional bias: gly residues. The interval Met-714–Arg-739 is RNA-binding RGG-box. An asymmetric dimethylarginine mark is found at Arg-715, Arg-720, and Arg-727. Asymmetric dimethylarginine; alternate occurs at positions 733 and 739. Omega-N-methylarginine; alternate is present on residues Arg-733 and Arg-739. Arg-739 is modified (dimethylated arginine; in A2780 ovarian carcinoma cell line). The segment covering Arg-739–Ile-749 has biased composition (gly residues). 2 positions are modified to asymmetric dimethylarginine: Arg-755 and Arg-762. The disordered stretch occupies residues Gly-769–Ser-799. Over residues Asn-778–Ser-799 the composition is skewed to low complexity. N6-acetyllysine; alternate is present on Lys-814. Lys-814 participates in a covalent cross-link: Glycyl lysine isopeptide (Lys-Gly) (interchain with G-Cter in SUMO2); alternate.

Oligomer (via ATPase domain and RNA-binding RGG-box region); oligomerization occurs upon ATP-binding in a chromatin-associated RNAs (caRNAs)- and transcription-dependent manner and is required for chromatin decompaction. ATP hydrolysis is required to cycle from an oligomeric to monomeric state to compact chromatin. Component of the coding region determinant (CRD)-mediated complex, composed of DHX9, HNRNPU, IGF2BP1, SYNCRIP and YBX1. Identified in the spliceosome C complex. Identified in a IGF2BP1-dependent mRNP granule complex containing untranslated mRNAs. Associates with heterogeneous nuclear ribonucleoprotein (hnRNP) particles. Associates (via middle region) with the C-terminal domain (CTD) RNA polymerase II (Pol II) holoenzyme; this association occurs in a RNA-independent manner. Associates (via middle region) with the core-TFIIH basal transcription factor complex; this association inhibits the CTD phosphorylation of RNA polymerase II holoenzyme by down-regulating TFIIH kinase activity. Associates with the telomerase holoenzyme complex. Associates with spindle microtubules (MTs) in a TPX2-dependent manner. Interacts (via C-terminus) with actin; this interaction is direct and mediates association with the phosphorylated CTD of RNA polymerase II and is disrupted in presence of the long non-coding H19 RNA. Interacts with AURKA. Interacts (via C-terminus) with CBX5; this interaction is, at least in part, RNA-dependent. Interacts with CR2. Interacts with CRY1. Interacts (via C-terminus) with EP300; this interaction enhances DNA-binding to nuclear scaffold/matrix attachment region (S/MAR) elements. Interacts with ERBB4. Interacts with GEMIN5. Interacts with IGF2BP1. Interacts with IGF2BP2 and IGF2BP3. Interacts with NCL; this interaction occurs during mitosis. Interacts (via C-terminus) with NR3C1 (via C-terminus). Interacts with PLK1; this interaction induces phosphorylation of HNRNPU at Ser-59 in mitosis. Interacts with POU3F4. Interacts with SMARCA4; this interaction occurs in embryonic stem cells and stimulates global Pol II-mediated transcription. Interacts (via C-terminus) with TOP2A; this interaction protects the topoisomerase TOP2A from degradation and positively regulates the relaxation of supercoiled DNA by TOP2A in a RNA-dependent manner. Interacts with TPX2; this interaction recruits HNRNPU to spindle microtubules (MTs). Interacts with UBQLN2. Interacts (via RNA-binding RGG-box region) with ZBTB7B; the interaction facilitates the recruitment of long non-coding RNA Blnc1 by ZBTB7B. Interacts with ERCC6. In terms of assembly, (Microbial infection) Interacts with HIV-1 protein Rev. Post-translationally, cleaved at Asp-100 by CASP3 during T-cell apoptosis, resulting in a loss of DNA- and chromatin-binding activities. In terms of processing, extensively phosphorylated. Phosphorylated on Ser-59 by PLK1 and dephosphorylated by protein phosphatase 2A (PP2A) in mitosis. Arg-739 is dimethylated, probably to asymmetric dimethylarginine. Arg-733 is dimethylated, probably to asymmetric dimethylarginine. Post-translationally, citrullinated by PADI4. Widely expressed.

Its subcellular location is the nucleus. The protein localises to the nucleus matrix. The protein resides in the chromosome. It is found in the nucleus speckle. It localises to the cytoplasm. Its subcellular location is the cytoskeleton. The protein localises to the microtubule organizing center. The protein resides in the centrosome. It is found in the centromere. It localises to the kinetochore. Its subcellular location is the spindle. The protein localises to the spindle pole. The protein resides in the midbody. It is found in the cell surface. It localises to the cytoplasmic granule. Its function is as follows. DNA- and RNA-binding protein involved in several cellular processes such as nuclear chromatin organization, telomere-length regulation, transcription, mRNA alternative splicing and stability, Xist-mediated transcriptional silencing and mitotic cell progression. Plays a role in the regulation of interphase large-scale gene-rich chromatin organization through chromatin-associated RNAs (caRNAs) in a transcription-dependent manner, and thereby maintains genomic stability. Required for the localization of the long non-coding Xist RNA on the inactive chromosome X (Xi) and the subsequent initiation and maintenance of X-linked transcriptional gene silencing during X-inactivation. Plays a role as a RNA polymerase II (Pol II) holoenzyme transcription regulator. Promotes transcription initiation by direct association with the core-TFIIH basal transcription factor complex for the assembly of a functional pre-initiation complex with Pol II in a actin-dependent manner. Blocks Pol II transcription elongation activity by inhibiting the C-terminal domain (CTD) phosphorylation of Pol II and dissociates from Pol II pre-initiation complex prior to productive transcription elongation. Positively regulates CBX5-induced transcriptional gene silencing and retention of CBX5 in the nucleus. Negatively regulates glucocorticoid-mediated transcriptional activation. Key regulator of transcription initiation and elongation in embryonic stem cells upon leukemia inhibitory factor (LIF) signaling. Involved in the long non-coding RNA H19-mediated Pol II transcriptional repression. Participates in the circadian regulation of the core clock component BMAL1 transcription. Plays a role in the regulation of telomere length. Plays a role as a global pre-mRNA alternative splicing modulator by regulating U2 small nuclear ribonucleoprotein (snRNP) biogenesis. Plays a role in mRNA stability. Component of the CRD-mediated complex that promotes MYC mRNA stabilization. Enhances the expression of specific genes, such as tumor necrosis factor TNFA, by regulating mRNA stability, possibly through binding to the 3'-untranslated region (UTR). Plays a role in mitotic cell cycle regulation. Involved in the formation of stable mitotic spindle microtubules (MTs) attachment to kinetochore, spindle organization and chromosome congression. Phosphorylation at Ser-59 by PLK1 is required for chromosome alignement and segregation and progression through mitosis. Also contributes to the targeting of AURKA to mitotic spindle MTs. Binds to double- and single-stranded DNA and RNA, poly(A), poly(C) and poly(G) oligoribonucleotides. Binds to chromatin-associated RNAs (caRNAs). Associates with chromatin to scaffold/matrix attachment region (S/MAR) elements in a chromatin-associated RNAs (caRNAs)-dependent manner. Binds to the Xist RNA. Binds the long non-coding H19 RNA. Binds to SMN1/2 pre-mRNAs at G/U-rich regions. Binds to small nuclear RNAs (snRNAs). Binds to the 3'-UTR of TNFA mRNA. Binds (via RNA-binding RGG-box region) to the long non-coding Xist RNA; this binding is direct and bridges the Xist RNA and the inactive chromosome X (Xi). Also negatively regulates embryonic stem cell differentiation upon LIF signaling. Required for embryonic development. Binds to brown fat long non-coding RNA 1 (Blnc1); facilitates the recruitment of Blnc1 by ZBTB7B required to drive brown and beige fat development and thermogenesis. (Microbial infection) Negatively regulates immunodeficiency virus type 1 (HIV-1) replication by preventing the accumulation of viral mRNA transcripts in the cytoplasm. This is Heterogeneous nuclear ribonucleoprotein U from Homo sapiens (Human).